Consider the following 450-residue polypeptide: 23S rRNA (uracil(1939)-C(5))-methyltransferase RlmD (450 aa).

Residues 12-70 form the TRAM domain; sequence SKQLSAKLSLSVNQLDHLGAGIAQHQGKVVFIPGALPDETVTVQFTEQKKNYARAKLIK. Positions 83, 89, 92, and 171 each coordinate [4Fe-4S] cluster. Residues glutamine 283, phenylalanine 312, asparagine 317, glutamate 333, aspartate 360, and aspartate 380 each contribute to the S-adenosyl-L-methionine site. Cysteine 406 acts as the Nucleophile in catalysis.

Belongs to the class I-like SAM-binding methyltransferase superfamily. RNA M5U methyltransferase family. RlmD subfamily.

The enzyme catalyses uridine(1939) in 23S rRNA + S-adenosyl-L-methionine = 5-methyluridine(1939) in 23S rRNA + S-adenosyl-L-homocysteine + H(+). Catalyzes the formation of 5-methyl-uridine at position 1939 (m5U1939) in 23S rRNA. The polypeptide is 23S rRNA (uracil(1939)-C(5))-methyltransferase RlmD (Shewanella baltica (strain OS155 / ATCC BAA-1091)).